Here is a 97-residue protein sequence, read N- to C-terminus: Putative septation protein SpoVG (97 aa).

This sequence belongs to the SpoVG family.

Its function is as follows. Essential for sporulation. Interferes with or is a negative regulator of the pathway leading to asymmetric septation. In Bacillus licheniformis (strain ATCC 14580 / DSM 13 / JCM 2505 / CCUG 7422 / NBRC 12200 / NCIMB 9375 / NCTC 10341 / NRRL NRS-1264 / Gibson 46), this protein is Putative septation protein SpoVG.